Reading from the N-terminus, the 421-residue chain is Ribulose bisphosphate carboxylase large chain (421 aa).

Residues N68 and T118 each coordinate substrate. K120 (proton acceptor) is an active-site residue. K122 is a substrate binding site. Mg(2+)-binding residues include K146, D148, and E149. At K146 the chain carries N6-carboxylysine. Residue H239 is the Proton acceptor of the active site. Positions 240, 272, and 324 each coordinate substrate.

Belongs to the RuBisCO large chain family. Type I subfamily. In terms of assembly, heterohexadecamer of 8 large chains and 8 small chains; disulfide-linked. The disulfide link is formed within the large subunit homodimers. Mg(2+) serves as cofactor. In terms of processing, the disulfide bond which can form in the large chain dimeric partners within the hexadecamer appears to be associated with oxidative stress and protein turnover.

The protein localises to the plastid. The protein resides in the chloroplast. It carries out the reaction 2 (2R)-3-phosphoglycerate + 2 H(+) = D-ribulose 1,5-bisphosphate + CO2 + H2O. It catalyses the reaction D-ribulose 1,5-bisphosphate + O2 = 2-phosphoglycolate + (2R)-3-phosphoglycerate + 2 H(+). Its function is as follows. RuBisCO catalyzes two reactions: the carboxylation of D-ribulose 1,5-bisphosphate, the primary event in carbon dioxide fixation, as well as the oxidative fragmentation of the pentose substrate in the photorespiration process. Both reactions occur simultaneously and in competition at the same active site. The protein is Ribulose bisphosphate carboxylase large chain (rbcL) of Aegilops crassa (Persian goatgrass).